Reading from the N-terminus, the 127-residue chain is Fumarate reductase subunit C (127 aa).

The next 3 helical transmembrane spans lie at 30-50 (ATVL…GSLV), 67-87 (IVVA…QTFF), and 107-127 (VVVL…LVIV).

This sequence belongs to the FrdC family. Part of an enzyme complex containing four subunits: a flavoprotein (FrdA), an iron-sulfur protein (FrdB), and two hydrophobic anchor proteins (FrdC and FrdD).

It is found in the cell inner membrane. Functionally, anchors the catalytic components of the fumarate reductase complex to the cell membrane, binds quinones. The protein is Fumarate reductase subunit C of Aliivibrio fischeri (strain ATCC 700601 / ES114) (Vibrio fischeri).